A 418-amino-acid polypeptide reads, in one-letter code: Serine hydroxymethyltransferase (418 aa).

(6S)-5,6,7,8-tetrahydrofolate is bound by residues Leu-121 and 125–127 (GHL). Lys-230 is modified (N6-(pyridoxal phosphate)lysine). Position 356–358 (356–358 (SPF)) interacts with (6S)-5,6,7,8-tetrahydrofolate.

This sequence belongs to the SHMT family. Homodimer. The cofactor is pyridoxal 5'-phosphate.

The protein resides in the cytoplasm. It catalyses the reaction (6R)-5,10-methylene-5,6,7,8-tetrahydrofolate + glycine + H2O = (6S)-5,6,7,8-tetrahydrofolate + L-serine. Its pathway is one-carbon metabolism; tetrahydrofolate interconversion. It functions in the pathway amino-acid biosynthesis; glycine biosynthesis; glycine from L-serine: step 1/1. Its function is as follows. Catalyzes the reversible interconversion of serine and glycine with tetrahydrofolate (THF) serving as the one-carbon carrier. This reaction serves as the major source of one-carbon groups required for the biosynthesis of purines, thymidylate, methionine, and other important biomolecules. Also exhibits THF-independent aldolase activity toward beta-hydroxyamino acids, producing glycine and aldehydes, via a retro-aldol mechanism. This is Serine hydroxymethyltransferase from Pseudoalteromonas translucida (strain TAC 125).